The sequence spans 301 residues: MTVQRILIVSGTHGNEINPVWAVKQFSRKENSLNNGIEYEYIIGNPAAYEKGCRYIDVDLNRSFKESGNFDQHKNSFYETNRANFLVDEFGIDGSKPCQIAIDLHTTTANMGTSIVMYGRRSKDFCLAALLQNKFGLPIYLHEKDKAQTGFLVEAWPCGLVIEIGAVAQNFYDQNIVNRFSLIIGSLREEIDKLKNKLVELPKELVVHVHQGSIDYPRDEKGDIDGIIHPARINQDWKMIKKGDPLFLDSQGIIHKYERDKLIWPVFIGEVAYKEKKIAMSYTKKEVICSKKQWVQEFESF.

Zn(2+) is bound by residues His13 and Glu16. Residues Arg54 and 61-62 (NR) contribute to the substrate site. His105 provides a ligand contact to Zn(2+). 2 residues coordinate substrate: Glu163 and Tyr273.

The protein belongs to the AspA/AstE family. Aspartoacylase subfamily. Zn(2+) serves as cofactor.

It carries out the reaction an N-acyl-L-aspartate + H2O = a carboxylate + L-aspartate. This Prochlorococcus marinus (strain MIT 9301) protein is Probable aspartoacylase.